The chain runs to 338 residues: D-alanine--D-alanine ligase (338 aa).

One can recognise an ATP-grasp domain in the interval 120 to 324 (KRVMLAEGLP…YEDLCIEVLK (205 aa)). 150 to 205 (PDKLGLPLIVKPAREGSSIGLTKVTERAGMADAVAQAEKLDADILCEQFISGDEVT) contacts ATP. 3 residues coordinate Mg(2+): aspartate 277, glutamate 291, and asparagine 293.

Belongs to the D-alanine--D-alanine ligase family. Requires Mg(2+) as cofactor. Mn(2+) is required as a cofactor.

It is found in the cytoplasm. It catalyses the reaction 2 D-alanine + ATP = D-alanyl-D-alanine + ADP + phosphate + H(+). It functions in the pathway cell wall biogenesis; peptidoglycan biosynthesis. Its function is as follows. Cell wall formation. The sequence is that of D-alanine--D-alanine ligase from Polaromonas sp. (strain JS666 / ATCC BAA-500).